Consider the following 464-residue polypeptide: Protein ABHD18 (464 aa).

A signal peptide spans 1-24 (MGVSKLDILYRRLLLTKLFIRGWG). A glycan (N-linked (GlcNAc...) asparagine) is linked at Asn-341.

Belongs to the AB hydrolase superfamily.

The protein resides in the secreted. This Rattus norvegicus (Rat) protein is Protein ABHD18.